A 460-amino-acid polypeptide reads, in one-letter code: TNF receptor-associated factor family protein DDB_G0290883 (460 aa).

The RING-type; degenerate zinc finger occupies 27 to 67 (CPICFEFIYKKQIYQCKSGHHACKECWEKSLETKKECMTCK). 2 TRAF-type zinc fingers span residues 141–194 (SHLI…KKEL) and 196–253 (THYK…SELQ). Residues 320 to 448 (GYRNKWIISN…DDKLTIEIYI (129 aa)) enclose the MATH domain.

It belongs to the TNF receptor-associated factor family. A subfamily.

The protein resides in the cytoplasm. Its function is as follows. Probable adapter protein and signal transducer that links members of the tumor necrosis factor receptor family to different signaling pathways by association with the receptor cytoplasmic domain and kinases. In Dictyostelium discoideum (Social amoeba), this protein is TNF receptor-associated factor family protein DDB_G0290883.